Here is a 705-residue protein sequence, read N- to C-terminus: Translation initiation factor IF-2 (705 aa).

The disordered stretch occupies residues 40–124 (DDQIKALDKK…QPAAPKEIPS (85 aa)). Basic and acidic residues predominate over residues 41–58 (DQIKALDKKFKKEQKNDN). The span at 59–77 (KQSTQNNHQKSNNQNQNKG) shows a compositional bias: low complexity. Over residues 94–108 (KGNKKNNRNNKKNNK) the composition is skewed to basic residues. A tr-type G domain is found at 207-376 (ERPAVVTIMG…GLVAEVQELK (170 aa)). The interval 216–223 (GHVDHGKT) is G1. 216-223 (GHVDHGKT) is a GTP binding site. A G2 region spans residues 241 to 245 (GITQH). Positions 262–265 (DTPG) are G3. GTP is bound by residues 262 to 266 (DTPGH) and 316 to 319 (NKID). The G4 stretch occupies residues 316–319 (NKID). Residues 352–354 (SAL) form a G5 region.

Belongs to the TRAFAC class translation factor GTPase superfamily. Classic translation factor GTPase family. IF-2 subfamily.

The protein localises to the cytoplasm. In terms of biological role, one of the essential components for the initiation of protein synthesis. Protects formylmethionyl-tRNA from spontaneous hydrolysis and promotes its binding to the 30S ribosomal subunits. Also involved in the hydrolysis of GTP during the formation of the 70S ribosomal complex. This is Translation initiation factor IF-2 from Staphylococcus aureus (strain MSSA476).